Here is a 672-residue protein sequence, read N- to C-terminus: Hydroxyproline O-galactosyltransferase GALT5 (672 aa).

Topologically, residues Met1 to Arg28 are cytoplasmic. Residues Val29–Phe49 form a helical; Signal-anchor for type II membrane protein membrane-spanning segment. Topologically, residues Lys50 to Arg672 are lumenal. The Galectin domain maps to Lys191–Ala392. 2 N-linked (GlcNAc...) asparagine glycosylation sites follow: Asn306 and Asn620.

The protein belongs to the glycosyltransferase 31 family. Mn(2+) serves as cofactor. In terms of tissue distribution, expressed in juvenile leaves, stems, cauline leaves and siliques.

It localises to the golgi apparatus membrane. Its pathway is protein modification; protein glycosylation. Functionally, possesses hydroxyproline O-galactosyltransferase activity. Transfers galactose from UDP-galactose to hydroxyproline residues in the arabinogalactan proteins (AGPs). Is specific for AGPs containing non-contiguous peptidyl hydroxyproline residues. Utilizes UDP-galactose solely as sugar donor. The addition of galactose onto the peptidyl hydroxyproline residues in AGP core proteins represents the first committed step in arabinogalactan polysaccharide addition. AGP glycans play essential roles in both vegetative and reproductive plant growth. The protein is Hydroxyproline O-galactosyltransferase GALT5 of Arabidopsis thaliana (Mouse-ear cress).